A 2488-amino-acid polypeptide reads, in one-letter code: PKS-NRPS hybrid synthetase swnK (2488 aa).

Positions 33-422 (FEQVADRFPD…GRIDGVVKIR (390 aa)) are adenylation (A) domain. Residues 523–598 (QPTSELEQRI…ALAAYLAGTG (76 aa)) form the Carrier 1 domain. Ser-558 bears the O-(pantetheine 4'-phosphoryl)serine mark. The Ketosynthase family 3 (KS3) domain maps to 616–1039 (HEDIAIVSMA…GTNAHVIVEE (424 aa)). Catalysis depends on for beta-ketoacyl synthase activity residues Cys-785, His-920, and His-960. A malonyl-CoA:ACP transacylase (MAT) domain region spans residues 1149–1471 (LFTGQGSQLP…SLSELHVRHV (323 aa)). Residues 1723–1901 (GAVLVTGGLG…ASSVAYGTWA (179 aa)) form a ketoreductase (KR) domain region. One can recognise a Carrier 2 domain in the interval 2002-2077 (SIVLHMVQAT…SLSEFLLCRL (76 aa)). Ser-2037 carries the post-translational modification O-(pantetheine 4'-phosphoryl)serine. The interval 2084 to 2103 (STSSPSDTDGATPSTPTSAA) is disordered. Positions 2136-2364 (VTGATGFVGT…VLPVDYLCGT (229 aa)) are thioester reductase (TE) domain.

It in the N-terminal section; belongs to the NRP synthetase family.

The catalysed reaction is L-pipecolate + malonyl-CoA + 2 NADPH + 4 H(+) = (8aS)-octahydroindolizin-1-one + CO2 + 2 NADP(+) + CoA + 2 H2O. It carries out the reaction L-pipecolate + malonyl-CoA + 3 NADPH + 5 H(+) = (1R,8aS)-octahydroindolizin-1-ol + CO2 + 3 NADP(+) + CoA + 2 H2O. The enzyme catalyses L-pipecolate + malonyl-CoA + 3 NADPH + 5 H(+) = (1S,8aS)-octahydroindolizin-1-ol + CO2 + 3 NADP(+) + CoA + 2 H2O. It functions in the pathway mycotoxin biosynthesis. PKS-NRPS hybrid synthetase; part of the gene cluster that mediates the biosynthesis of swainsonine (SW), a cytotoxic fungal alkaloid and a potential cancer therapy drug. Swainsonine production occurs via a multibranched pathway and is dispensable for fungal colonization of plants and infection of insect hosts. The first step of swainsonine biosynthesis is the production of the precursor pipecolic acid (PA) via conversion of L-lysine (Lys) to 1-piperideine-6-carboxylate (P6C) by the aminotransferase swnA, the latter being further reduced to PA by the reductase swnR. PA can be converted from lysine by both the SW biosynthetic cluster and the unclustered genes such as lysine cyclodeaminase. The PKS-NRPS hybrid synthetase swnK uptakes and condensates PA and malonyl-CoA with and without skipping of the ketoreductase (KR) domain in order to produce 3 intermediates, 1-oxoindolizidine, (1S)-1-hydroxyindolizin, and (1R)-1-hydroxyindolizine; with the transisomer (1S)-1-hydroxyindolizin being predominant. The terminal thioester reductase (TE) domain of swnK is involved in reduction of the thioester bond to release the intermediate aldehydes. The oxidoreductase swnN could contribute to the reduction of 1-oxoindolizidine to (1S)-1-hydroxyindolizin and (1R)-1-hydroxyindolizine, contributing to the major route of SW production. The dioxygenase swnH2 would be responsible for the oxidization of (1R)-1-hydroxyindolizine into (1R,2S)-1,2-dihydroxyindolizine and of (1S)-1-hydroxyindolizin to yield both (1R,2S)-1,2-dihydroxyindolizine and (1S,2S)-1,2-dihydroxyindolizine. The dioxygenase swnH1 then performs the conversion of the 1,2-dihydroxyindolizine epimers to SW. The sequence is that of PKS-NRPS hybrid synthetase swnK from Metarhizium robertsii (strain ARSEF 23 / ATCC MYA-3075) (Metarhizium anisopliae (strain ARSEF 23)).